The primary structure comprises 514 residues: ATP synthase subunit alpha (514 aa).

170-177 (GDRQIGKT) is a binding site for ATP.

Belongs to the ATPase alpha/beta chains family. As to quaternary structure, F-type ATPases have 2 components, CF(1) - the catalytic core - and CF(0) - the membrane proton channel. CF(1) has five subunits: alpha(3), beta(3), gamma(1), delta(1), epsilon(1). CF(0) has three main subunits: a(1), b(2) and c(9-12). The alpha and beta chains form an alternating ring which encloses part of the gamma chain. CF(1) is attached to CF(0) by a central stalk formed by the gamma and epsilon chains, while a peripheral stalk is formed by the delta and b chains.

The protein resides in the cell inner membrane. The enzyme catalyses ATP + H2O + 4 H(+)(in) = ADP + phosphate + 5 H(+)(out). Functionally, produces ATP from ADP in the presence of a proton gradient across the membrane. The alpha chain is a regulatory subunit. The chain is ATP synthase subunit alpha from Pseudomonas putida (strain GB-1).